We begin with the raw amino-acid sequence, 1241 residues long: ATP-dependent helicase/nuclease subunit A (1241 aa).

The region spanning 12–485 (SQWTDDQWKA…IDLAKNFRSR (474 aa)) is the UvrD-like helicase ATP-binding domain. 33 to 40 (AAAGSGKT) contacts ATP. Residues 505–805 (GEIDYDADAE…RIMTIHKSKG (301 aa)) form the UvrD-like helicase C-terminal domain.

The protein belongs to the helicase family. AddA subfamily. In terms of assembly, heterodimer of AddA and AddB/RexB. Mg(2+) is required as a cofactor.

It catalyses the reaction Couples ATP hydrolysis with the unwinding of duplex DNA by translocating in the 3'-5' direction.. It carries out the reaction ATP + H2O = ADP + phosphate + H(+). The heterodimer acts as both an ATP-dependent DNA helicase and an ATP-dependent, dual-direction single-stranded exonuclease. Recognizes the chi site generating a DNA molecule suitable for the initiation of homologous recombination. The AddA nuclease domain is required for chi fragment generation; this subunit has the helicase and 3' -&gt; 5' nuclease activities. This chain is ATP-dependent helicase/nuclease subunit A, found in Bacillus cereus (strain B4264).